Here is a 352-residue protein sequence, read N- to C-terminus: N-acetyl-gamma-glutamyl-phosphate reductase (352 aa).

Residue cysteine 156 is part of the active site.

This sequence belongs to the NAGSA dehydrogenase family. Type 1 subfamily.

It is found in the cytoplasm. The catalysed reaction is N-acetyl-L-glutamate 5-semialdehyde + phosphate + NADP(+) = N-acetyl-L-glutamyl 5-phosphate + NADPH + H(+). It participates in amino-acid biosynthesis; L-arginine biosynthesis; N(2)-acetyl-L-ornithine from L-glutamate: step 3/4. Catalyzes the NADPH-dependent reduction of N-acetyl-5-glutamyl phosphate to yield N-acetyl-L-glutamate 5-semialdehyde. This is N-acetyl-gamma-glutamyl-phosphate reductase from Rhodospirillum rubrum (strain ATCC 11170 / ATH 1.1.1 / DSM 467 / LMG 4362 / NCIMB 8255 / S1).